The sequence spans 314 residues: Ribonuclease Z (314 aa).

Histidine 62, histidine 64, aspartate 66, histidine 67, histidine 139, aspartate 210, and histidine 268 together coordinate Zn(2+). Aspartate 66 serves as the catalytic Proton acceptor.

This sequence belongs to the RNase Z family. In terms of assembly, homodimer. Zn(2+) is required as a cofactor.

It catalyses the reaction Endonucleolytic cleavage of RNA, removing extra 3' nucleotides from tRNA precursor, generating 3' termini of tRNAs. A 3'-hydroxy group is left at the tRNA terminus and a 5'-phosphoryl group is left at the trailer molecule.. In terms of biological role, zinc phosphodiesterase, which displays some tRNA 3'-processing endonuclease activity. Probably involved in tRNA maturation, by removing a 3'-trailer from precursor tRNA. The chain is Ribonuclease Z from Acaryochloris marina (strain MBIC 11017).